A 643-amino-acid chain; its full sequence is Sodium-dependent nutrient amino acid transporter 1 (643 aa).

Positions 1-38 are disordered; the sequence is MELKGVQPSNGSPNGNGNGATNAASTEKTDAEKPTAER. The Cytoplasmic segment spans residues 1–40; that stretch reads MELKGVQPSNGSPNGNGNGATNAASTEKTDAEKPTAERTN. The segment covering 8–26 has biased composition (low complexity); it reads PSNGSPNGNGNGATNAAST. The span at 27–36 shows a compositional bias: basic and acidic residues; it reads EKTDAEKPTA. Transmembrane regions (helical) follow at residues 41–61, 74–94, and 111–131; these read WGNG…LGNV, GAFL…MYYL, and SVVP…ICII. Residues asparagine 185, asparagine 190, and asparagine 200 are each glycosylated (N-linked (GlcNAc...) asparagine). A run of 9 helical transmembrane segments spans residues 231-251, 260-280, 309-329, 343-363, 403-423, 449-469, 476-496, 518-538, and 554-574; these read PDWK…LVIM, AAYF…IRAV, AVVQ…MFAS, IVTT…FAIL, LFSV…IVAL, VCGF…ILTL, TYVV…VYGL, CWSF…MATI, and VAGW…GLWY.

It belongs to the sodium:neurotransmitter symporter (SNF) (TC 2.A.22) family.

It is found in the membrane. Unusual broad substrate spectrum amino acid:sodium cotransporter that promotes absorption of the D isomers of essential amino acids. Neutral amino acids are the preferred substrates, especially methionine and phenylalanine. The chain is Sodium-dependent nutrient amino acid transporter 1 from Drosophila simulans (Fruit fly).